The sequence spans 593 residues: Dolichyl-phosphooligosaccharide-protein glycotransferase 2 (593 aa).

The Cytoplasmic segment spans residues 1 to 12 (MTPVGMDRKSLS). Residues 13 to 33 (LLILIVLLGLCIRLQNFGEIF) traverse the membrane as a helical segment. Over 34 to 98 (DSRIYYYGYD…GLFLGFWASE (65 aa)) the chain is Extracellular. The short motif at 41–43 (GYD) is the DXD motif 1 element. Asp-43 is a Mn(2+) binding site. Residues 99–119 (IFAVVFPVIIGVLCIVLVYLI) form a helical membrane-spanning segment. The Cytoplasmic portion of the chain corresponds to 120-128 (SLEVLRNEK). A helical transmembrane segment spans residues 129–149 (FALISAFIFSVCPVTVWKSLL). Residues 150 to 154 (GKADH) lie on the Extracellular side of the membrane. A Mn(2+)-binding site is contributed by Asp-153. The DXD motif 2 motif lies at 153-155 (DHH). Residue His-154 coordinates a glycophospholipid. Mn(2+) is bound at residue His-155. The helical transmembrane segment at 155–175 (HIWVVFLLLLSIWLVTKPGLL) threads the bilayer. Residues 176 to 180 (KLLSG) are Cytoplasmic-facing. A helical transmembrane segment spans residues 181 to 201 (IPMLLMALSWLGAPIYAALLA). Topologically, residues 202–229 (VSSLFQFNEKEVRIVGISNLIPVLSSIQ) are extracellular. The helical transmembrane segment at 230-250 (NLFLGFSFLAIAVFLLVGSFV) threads the bilayer. The Cytoplasmic portion of the chain corresponds to 251 to 265 (KRFERRFRYAIVYYL). A helical transmembrane segment spans residues 266 to 286 (CICSVALLSAYLMPVGWLGFV). Residues 287 to 310 (KSGISYVLGTDIYLPTIREARSFQ) lie on the Extracellular side of the membrane. The TIXE motif motif lies at 302–305 (TIRE). A helical transmembrane segment spans residues 311 to 331 (ILGVISSAGYLFFVLAIPALF). A topological domain (cytoplasmic) is located at residue Met-332. Residues 333-353 (LRNGFLKVFFVLSFLISILQL) form a helical membrane-spanning segment. Position 354 (Arg-354) is a topological domain, extracellular. Arg-354 is an a glycophospholipid binding site. A helical membrane pass occupies residues 355–375 (FVEVLAFPVAILASYTICQIL). At 376-411 (ERVDYPVFRKEEEGESKRRGRKEKKKAVEIRKKDHA) the chain is on the cytoplasmic side. A helical transmembrane segment spans residues 412-432 (TVIAFLLFLALPCFANSLAPV). The Extracellular segment spans residues 433-593 (EMTMDWKEAL…FGTVKIFEVK (161 aa)). Positions 468–470 (WWD) are interacts with target acceptor peptide in protein substrate. The WWDYG motif signature appears at 468–472 (WWDYG). Residues 524-539 (ELTVKPETNKTKFIPI) carry the DKi motif motif.

Belongs to the STT3 family. It depends on Mn(2+) as a cofactor. The cofactor is Mg(2+). Zn(2+) serves as cofactor.

The protein resides in the cell membrane. The enzyme catalyses an archaeal dolichyl phosphooligosaccharide + [protein]-L-asparagine = an archaeal dolichyl phosphate + a glycoprotein with the oligosaccharide chain attached by N-beta-D-glycosyl linkage to a protein L-asparagine.. Its pathway is protein modification; protein glycosylation. Oligosaccharyl transferase (OST) that catalyzes the initial transfer of a defined glycan (a GalNAc-linked heptasaccharide composed of 4 Hex, 3 dHex and a sulfate for A.fulgidus AglB-S) from the lipid carrier dolichol-monophosphate to an asparagine residue within an Asn-X-Ser/Thr consensus motif in nascent polypeptide chains, the first step in protein N-glycosylation. In Archaeoglobus fulgidus (strain ATCC 49558 / DSM 4304 / JCM 9628 / NBRC 100126 / VC-16), this protein is Dolichyl-phosphooligosaccharide-protein glycotransferase 2 (aglB2).